The primary structure comprises 262 residues: MQVDLLSSAQSAHTLHLFHQHSPLVHCMTNDVVQTFTANTLLALGASPAMVIETEEASQFAAIASALLINVGTLTQPRAQAMRAAVEQAKSSQTPWTLDPVAVGALDYRRHFCHELLSFKPAAIRGNASEIMALAGVANGGRGVDTTDAAVNAIPAAQTLARETGAIVVVTGEVDYVTDGHRAVGIHGGDPLMTKVVGTGCALSAVVAACCALPGDMLENVASACHWMKQAGERAVARSEGPGSFVPHFLDALWQLTQEVQA.

Substrate is bound at residue Met50. ATP-binding residues include Arg125 and Thr171. Gly198 lines the substrate pocket.

Belongs to the Thz kinase family. Requires Mg(2+) as cofactor.

It carries out the reaction 5-(2-hydroxyethyl)-4-methylthiazole + ATP = 4-methyl-5-(2-phosphooxyethyl)-thiazole + ADP + H(+). Its pathway is cofactor biosynthesis; thiamine diphosphate biosynthesis; 4-methyl-5-(2-phosphoethyl)-thiazole from 5-(2-hydroxyethyl)-4-methylthiazole: step 1/1. Functionally, catalyzes the phosphorylation of the hydroxyl group of 4-methyl-5-beta-hydroxyethylthiazole (THZ). This is Hydroxyethylthiazole kinase from Escherichia coli O157:H7.